Reading from the N-terminus, the 508-residue chain is Serine/threonine protein kinase OSK3 (508 aa).

The Protein kinase domain maps to 17–269 (YNLGRTLGIG…IREIREHQWF (253 aa)). ATP is bound by residues 23–31 (LGIGSFGKV) and Lys46. Asp140 serves as the catalytic Proton acceptor. The 41-residue stretch at 290-330 (MIDEDTLQDVVNLGYGKDHVCESLRNRLQNEATVAYYLLLD) folds into the UBA domain. One can recognise a KA1 domain in the interval 459–507 (NGRLPAVIKFEIQLYKTRDEKYLLDMQRVTGPQLLFLDFCADFLTKLRV).

The protein belongs to the protein kinase superfamily. Ser/Thr protein kinase family. As to quaternary structure, interacts with HDR1. In terms of tissue distribution, strongly expressed in immature seeds. Mostly expressed in panicles, and to a lower extent, in leaf sheaths.

The protein resides in the nucleus. The enzyme catalyses L-seryl-[protein] + ATP = O-phospho-L-seryl-[protein] + ADP + H(+). The catalysed reaction is L-threonyl-[protein] + ATP = O-phospho-L-threonyl-[protein] + ADP + H(+). The polypeptide is Serine/threonine protein kinase OSK3 (Oryza sativa subsp. indica (Rice)).